The sequence spans 35 residues: Alpha-amanitin proprotein 1 (35 aa).

Positions 1–10 (MSDINATRLP) are excised as a propeptide. (3R,4R)-4,5-dihydroxyisoleucine; in form alpha-amanitin is present on isoleucine 11. Isoleucine 11 bears the (3R,4S)-4-hydroxyisoleucine; in form gamma-amanitin mark. The cyclopeptide (Ile-Pro) cross-link spans 11 to 18 (IWGIGCNP). Positions 12–16 (WGIGC) form a cross-link, 2'-cysteinyl-6'-hydroxytryptophan sulfoxide (Trp-Cys). The residue at position 18 (proline 18) is a 4-hydroxyproline. The propeptide occupies 19–35 (CVGDDVTSVLTRGEALC).

The protein belongs to the MSDIN fungal toxin family. In terms of processing, processed by the macrocyclase-peptidase enzyme POPB to yield a toxic cyclic octapeptide. POPB first removes 10 residues from the N-terminus. Conformational trapping of the remaining peptide forces the enzyme to release this intermediate rather than proceed to macrocyclization. The enzyme rebinds the remaining peptide in a different conformation and catalyzes macrocyclization of the N-terminal 8 residues. In terms of tissue distribution, expressed in basidiocarps.

Functionally, major toxin belonging to the bicyclic octapeptides amatoxins that acts by binding non-competitively to RNA polymerase II and greatly slowing the elongation of transcripts from target promoters. This chain is Alpha-amanitin proprotein 1, found in Amanita exitialis (Guangzhou destroying angel).